We begin with the raw amino-acid sequence, 225 residues long: Uracil-DNA glycosylase (225 aa).

Residue Asp65 is the Proton acceptor of the active site.

The protein belongs to the uracil-DNA glycosylase (UDG) superfamily. UNG family.

Its subcellular location is the cytoplasm. The enzyme catalyses Hydrolyzes single-stranded DNA or mismatched double-stranded DNA and polynucleotides, releasing free uracil.. Excises uracil residues from the DNA which can arise as a result of misincorporation of dUMP residues by DNA polymerase or due to deamination of cytosine. The protein is Uracil-DNA glycosylase of Bacillus cereus (strain B4264).